A 1175-amino-acid chain; its full sequence is DNA-directed RNA polymerase subunit beta (1175 aa).

Residues 12 to 33 (QSKTDRPQSSSNGSSSLNGSVP) are disordered. Over residues 20-31 (SSSNGSSSLNGS) the composition is skewed to low complexity.

The protein belongs to the RNA polymerase beta chain family. In terms of assembly, the RNAP catalytic core consists of 2 alpha, 1 beta, 1 beta' and 1 omega subunit. When a sigma factor is associated with the core the holoenzyme is formed, which can initiate transcription.

It catalyses the reaction RNA(n) + a ribonucleoside 5'-triphosphate = RNA(n+1) + diphosphate. Functionally, DNA-dependent RNA polymerase catalyzes the transcription of DNA into RNA using the four ribonucleoside triphosphates as substrates. The sequence is that of DNA-directed RNA polymerase subunit beta from Mycobacterium avium (strain 104).